The primary structure comprises 353 residues: Protein RecA (353 aa).

74-81 (GPESSGKT) contacts ATP.

This sequence belongs to the RecA family.

It is found in the cytoplasm. In terms of biological role, can catalyze the hydrolysis of ATP in the presence of single-stranded DNA, the ATP-dependent uptake of single-stranded DNA by duplex DNA, and the ATP-dependent hybridization of homologous single-stranded DNAs. It interacts with LexA causing its activation and leading to its autocatalytic cleavage. This chain is Protein RecA, found in Bordetella bronchiseptica (strain ATCC BAA-588 / NCTC 13252 / RB50) (Alcaligenes bronchisepticus).